The sequence spans 162 residues: MFSAKARWIVAVVLRVAAAGAAAVAAVLMAMSHDEVIVYGMEVQAKFRYTPSLVFFVAANAAVSACSLVVLLVPSSTSKLAARLLLMADVVLGMVLAGAFAAAGAMAELGKNGNSHAGWIAICVQVPLFCDRVRSALVAGSATIVLYYLMLMYSIYTLPMFP.

The Cytoplasmic portion of the chain corresponds to 1–7 (MFSAKAR). Residues 8–28 (WIVAVVLRVAAAGAAAVAAVL) form a helical membrane-spanning segment. Residues 29–52 (MAMSHDEVIVYGMEVQAKFRYTPS) are Extracellular-facing. Residues 53–73 (LVFFVAANAAVSACSLVVLLV) traverse the membrane as a helical segment. Residues 74–83 (PSSTSKLAAR) are Cytoplasmic-facing. A helical transmembrane segment spans residues 84-104 (LLLMADVVLGMVLAGAFAAAG). Residues 105-135 (AMAELGKNGNSHAGWIAICVQVPLFCDRVRS) lie on the Extracellular side of the membrane. Residues 136 to 156 (ALVAGSATIVLYYLMLMYSIY) traverse the membrane as a helical segment. At 157–162 (TLPMFP) the chain is on the cytoplasmic side.

It belongs to the Casparian strip membrane proteins (CASP) family. As to quaternary structure, homodimer and heterodimers.

Its subcellular location is the cell membrane. The polypeptide is CASP-like protein 1C1 (Oryza sativa subsp. japonica (Rice)).